A 256-amino-acid chain; its full sequence is Thioredoxin-dependent peroxide reductase, mitochondrial (256 aa).

The N-terminal 61 residues, Met1 to His61, are a transit peptide targeting the mitochondrion. Residues Pro63–Tyr221 enclose the Thioredoxin domain. Residue Lys83 is modified to N6-succinyllysine. The residue at position 91 (Lys91) is an N6-acetyllysine; alternate. Lys91 is modified (N6-succinyllysine; alternate). The active-site Cysteine sulfenic acid (-SOH) intermediate is Cys108. The residue at position 146 (Thr146) is a Phosphothreonine.

This sequence belongs to the peroxiredoxin family. AhpC/Prx1 subfamily. As to quaternary structure, homodimer; disulfide-linked, upon oxidation. 6 homodimers assemble to form a ring-like dodecamer. Interacts with NEK6. Interacts with LRRK2. Interacts with MAP3K13. Interacts with RPS6KC1 (via PX domain). Post-translationally, phosphorylated by LRRK2; phosphorylation reduces perodixase activity. In terms of processing, the enzyme can be inactivated by further oxidation of the cysteine sulfenic acid (C(P)-SOH) to sulphinic acid (C(P)-SO2H) and sulphonic acid (C(P)-SO3H) instead of its condensation to a disulfide bond. S-palmitoylated.

The protein resides in the mitochondrion. Its subcellular location is the cytoplasm. It localises to the early endosome. The catalysed reaction is a hydroperoxide + [thioredoxin]-dithiol = an alcohol + [thioredoxin]-disulfide + H2O. Thiol-specific peroxidase that catalyzes the reduction of hydrogen peroxide and organic hydroperoxides to water and alcohols, respectively. Plays a role in cell protection against oxidative stress by detoxifying peroxides. Acts synergistically with MAP3K13 to regulate the activation of NF-kappa-B in the cytosol. Required for the maintenance of physical strength. This is Thioredoxin-dependent peroxide reductase, mitochondrial (PRDX3) from Pongo abelii (Sumatran orangutan).